The chain runs to 140 residues: Transcription antitermination protein NusB (140 aa).

This sequence belongs to the NusB family.

In terms of biological role, involved in transcription antitermination. Required for transcription of ribosomal RNA (rRNA) genes. Binds specifically to the boxA antiterminator sequence of the ribosomal RNA (rrn) operons. The sequence is that of Transcription antitermination protein NusB from Streptococcus pneumoniae serotype 2 (strain D39 / NCTC 7466).